The sequence spans 344 residues: Anthranilate phosphoribosyltransferase 2 (344 aa).

5-phospho-alpha-D-ribose 1-diphosphate-binding positions include Gly-81, 84–85 (GD), Thr-89, 91–94 (NIST), 109–117 (KHGNRALSS), and Ala-121. Gly-81 is a binding site for anthranilate. Position 93 (Ser-93) interacts with Mg(2+). Asn-112 serves as a coordination point for anthranilate. Arg-167 serves as a coordination point for anthranilate. The Mg(2+) site is built by Asp-226 and Glu-227.

This sequence belongs to the anthranilate phosphoribosyltransferase family. As to quaternary structure, homodimer. Requires Mg(2+) as cofactor.

The enzyme catalyses N-(5-phospho-beta-D-ribosyl)anthranilate + diphosphate = 5-phospho-alpha-D-ribose 1-diphosphate + anthranilate. It functions in the pathway amino-acid biosynthesis; L-tryptophan biosynthesis; L-tryptophan from chorismate: step 2/5. Functionally, catalyzes the transfer of the phosphoribosyl group of 5-phosphorylribose-1-pyrophosphate (PRPP) to anthranilate to yield N-(5'-phosphoribosyl)-anthranilate (PRA). In Ralstonia nicotianae (strain ATCC BAA-1114 / GMI1000) (Ralstonia solanacearum), this protein is Anthranilate phosphoribosyltransferase 2.